A 283-amino-acid chain; its full sequence is Pantothenate synthetase (283 aa).

Position 30-37 (30-37 (MGYLHDGH)) interacts with ATP. Histidine 37 (proton donor) is an active-site residue. Position 61 (glutamine 61) interacts with (R)-pantoate. Position 61 (glutamine 61) interacts with beta-alanine. 147-150 (GKKD) contacts ATP. Glutamine 153 contacts (R)-pantoate. ATP is bound by residues isoleucine 176 and 184-187 (MSSR).

Belongs to the pantothenate synthetase family. In terms of assembly, homodimer.

It localises to the cytoplasm. It catalyses the reaction (R)-pantoate + beta-alanine + ATP = (R)-pantothenate + AMP + diphosphate + H(+). It participates in cofactor biosynthesis; (R)-pantothenate biosynthesis; (R)-pantothenate from (R)-pantoate and beta-alanine: step 1/1. In terms of biological role, catalyzes the condensation of pantoate with beta-alanine in an ATP-dependent reaction via a pantoyl-adenylate intermediate. This Geobacter sulfurreducens (strain ATCC 51573 / DSM 12127 / PCA) protein is Pantothenate synthetase.